The chain runs to 529 residues: Bifunctional purine biosynthesis protein PurH (529 aa).

The MGS-like domain maps to 1–148 (MQQRRPIRRA…KNHKDVAIVV (148 aa)).

Belongs to the PurH family.

It catalyses the reaction (6R)-10-formyltetrahydrofolate + 5-amino-1-(5-phospho-beta-D-ribosyl)imidazole-4-carboxamide = 5-formamido-1-(5-phospho-D-ribosyl)imidazole-4-carboxamide + (6S)-5,6,7,8-tetrahydrofolate. The catalysed reaction is IMP + H2O = 5-formamido-1-(5-phospho-D-ribosyl)imidazole-4-carboxamide. It functions in the pathway purine metabolism; IMP biosynthesis via de novo pathway; 5-formamido-1-(5-phospho-D-ribosyl)imidazole-4-carboxamide from 5-amino-1-(5-phospho-D-ribosyl)imidazole-4-carboxamide (10-formyl THF route): step 1/1. It participates in purine metabolism; IMP biosynthesis via de novo pathway; IMP from 5-formamido-1-(5-phospho-D-ribosyl)imidazole-4-carboxamide: step 1/1. In Pectobacterium carotovorum subsp. carotovorum (strain PC1), this protein is Bifunctional purine biosynthesis protein PurH.